Here is an 88-residue protein sequence, read N- to C-terminus: Elongation factor 1-beta (88 aa).

It belongs to the EF-1-beta/EF-1-delta family.

In terms of biological role, promotes the exchange of GDP for GTP in EF-1-alpha/GDP, thus allowing the regeneration of EF-1-alpha/GTP that could then be used to form the ternary complex EF-1-alpha/GTP/AAtRNA. In Halobacterium salinarum (strain ATCC 29341 / DSM 671 / R1), this protein is Elongation factor 1-beta.